The following is a 160-amino-acid chain: Troponin C, skeletal muscle (160 aa).

Position 2 is an N-acetylthreonine (threonine 2). 4 EF-hand domains span residues 15 to 50 (EMIA…LGQT), 51 to 86 (PTKE…QMKE), 91 to 126 (KSEE…SGEH), and 127 to 160 (VTEE…EGVQ). Ca(2+) is bound by residues aspartate 28, aspartate 30, aspartate 34, glutamate 39, aspartate 64, aspartate 66, serine 68, threonine 70, glutamate 75, aspartate 104, asparagine 106, aspartate 108, tyrosine 110, glutamate 115, aspartate 140, asparagine 142, aspartate 144, arginine 146, and glutamate 151.

It belongs to the troponin C family. As to expression, fast skeletal muscle.

Functionally, troponin is the central regulatory protein of striated muscle contraction. Tn consists of three components: Tn-I which is the inhibitor of actomyosin ATPase, Tn-T which contains the binding site for tropomyosin and Tn-C. The binding of calcium to Tn-C abolishes the inhibitory action of Tn on actin filaments. This is Troponin C, skeletal muscle (Tnnc2) from Mus musculus (Mouse).